An 88-amino-acid chain; its full sequence is Small ribosomal subunit protein bS20 (88 aa).

Belongs to the bacterial ribosomal protein bS20 family.

In terms of biological role, binds directly to 16S ribosomal RNA. This is Small ribosomal subunit protein bS20 from Clostridioides difficile (strain 630) (Peptoclostridium difficile).